Reading from the N-terminus, the 427-residue chain is Tegument protein VP16 homolog (427 aa).

It belongs to the herpesviridae tegument protein VP16 protein family.

The protein resides in the virion tegument. Its subcellular location is the host nucleus. Transcriptional activator of immediate-early (IE) gene products (alpha genes). Acts as a key activator of lytic infection by initiating the lytic program through the assembly of the transcriptional regulatory VP16-induced complex composed of VP16 and two cellular factors, HCFC1 and POU2F1. VP16-induced complex represents a regulatory switch: when it is on, it promotes IE-gene expression and thus lytic infection, and when it is off, it limits IE-gene transcription favoring latent infection. Its function is as follows. May play a role in the aggregation of tegument proteins around nucleocapsids during virus morphogenesis. The chain is Tegument protein VP16 homolog (MDV061) from Gallus gallus (Chicken).